A 448-amino-acid polypeptide reads, in one-letter code: tRNA modification GTPase MnmE (448 aa).

(6S)-5-formyl-5,6,7,8-tetrahydrofolate-binding residues include arginine 24, glutamate 81, and lysine 120. The TrmE-type G domain maps to 216-373 (GLNVVLVGAP…LKRTLLREAG (158 aa)). Asparagine 226 contributes to the K(+) binding site. GTP is bound by residues 226–231 (NVGKSS), 245–251 (TDIAGTT), and 270–273 (DTAG). Serine 230 is a Mg(2+) binding site. Positions 245, 247, and 250 each coordinate K(+). Residue threonine 251 participates in Mg(2+) binding. Lysine 448 is a binding site for (6S)-5-formyl-5,6,7,8-tetrahydrofolate.

It belongs to the TRAFAC class TrmE-Era-EngA-EngB-Septin-like GTPase superfamily. TrmE GTPase family. As to quaternary structure, homodimer. Heterotetramer of two MnmE and two MnmG subunits. K(+) is required as a cofactor.

It is found in the cytoplasm. Its function is as follows. Exhibits a very high intrinsic GTPase hydrolysis rate. Involved in the addition of a carboxymethylaminomethyl (cmnm) group at the wobble position (U34) of certain tRNAs, forming tRNA-cmnm(5)s(2)U34. This Neisseria meningitidis serogroup C / serotype 2a (strain ATCC 700532 / DSM 15464 / FAM18) protein is tRNA modification GTPase MnmE.